A 127-amino-acid polypeptide reads, in one-letter code: Fluoride-specific ion channel FluC (127 aa).

The next 4 membrane-spanning stretches (helical) occupy residues 8 to 28 (LLIA…QYWF), 37 to 57 (PWGT…VYAI), 68 to 88 (WKFL…TFSY), and 100 to 120 (ILFL…AFAG). Na(+)-binding residues include Gly78 and Thr81.

Belongs to the fluoride channel Fluc/FEX (TC 1.A.43) family.

It is found in the cell inner membrane. It carries out the reaction fluoride(in) = fluoride(out). With respect to regulation, na(+) is not transported, but it plays an essential structural role and its presence is essential for fluoride channel function. Fluoride-specific ion channel. Important for reducing fluoride concentration in the cell, thus reducing its toxicity. The chain is Fluoride-specific ion channel FluC from Leptospira interrogans serogroup Icterohaemorrhagiae serovar Lai (strain 56601).